The sequence spans 405 residues: Cytochrome P450 109 (405 aa).

Position 351 (C351) interacts with heme.

This sequence belongs to the cytochrome P450 family. Heme is required as a cofactor.

In terms of biological role, cytochromes P450 are a group of heme-thiolate monooxygenases. They oxidize a variety of structurally unrelated compounds, including steroids, fatty acids, and xenobiotics. The sequence is that of Cytochrome P450 109 (cyp109) from Bacillus spizizenii (strain ATCC 23059 / NRRL B-14472 / W23) (Bacillus subtilis subsp. spizizenii).